A 576-amino-acid polypeptide reads, in one-letter code: Septation ring formation regulator EzrA (576 aa).

The Extracellular portion of the chain corresponds to 1–7 (MSSTVII). Residues 8–26 (LIVVLLVILVAFYAFAILM) traverse the membrane as a helical segment. Over 27–576 (RKKTEDRILA…FKNKPTPDYL (550 aa)) the chain is Cytoplasmic. Coiled-coil stretches lie at residues 105 to 134 (RARE…VAQL) and 277 to 301 (EQFE…LYAI).

It belongs to the EzrA family.

It is found in the cell membrane. Its function is as follows. Negative regulator of FtsZ ring formation; modulates the frequency and position of FtsZ ring formation. Inhibits FtsZ ring formation at polar sites. Interacts either with FtsZ or with one of its binding partners to promote depolymerization. This chain is Septation ring formation regulator EzrA, found in Lactococcus lactis subsp. lactis (strain IL1403) (Streptococcus lactis).